The following is a 493-amino-acid chain: Ectonucleotide pyrophosphatase/phosphodiesterase 2 (493 aa).

Residues methionine 1–histidine 28 lie on the Cytoplasmic side of the membrane. The chain crosses the membrane as a helical; Signal-anchor for type II membrane protein span at residues phenylalanine 29 to leucine 45. At tyrosine 46–glutamine 493 the chain is on the extracellular side. N-linked (GlcNAc...) asparagine glycans are attached at residues asparagine 62, asparagine 69, and asparagine 112. The interval threonine 76–asparagine 438 is phosphodiesterase. The active-site Nucleophile is the threonine 127. N-linked (GlcNAc...) asparagine glycans are attached at residues asparagine 153 and asparagine 441.

Belongs to the nucleotide pyrophosphatase/phosphodiesterase family. Autophosphorylated as part of the catalytic cycle of phosphodiesterase/pyrophosphatase activity.

The protein localises to the membrane. It carries out the reaction Hydrolytically removes 5'-nucleotides successively from the 3'-hydroxy termini of 3'-hydroxy-terminated oligonucleotides.. It catalyses the reaction a ribonucleoside 5'-triphosphate + H2O = a ribonucleoside 5'-phosphate + diphosphate + H(+). The enzyme catalyses a 2'-deoxyribonucleoside 5'-triphosphate + H2O = a 2'-deoxyribonucleoside 5'-phosphate + diphosphate + H(+). Mediates extracellular nucleotide derived phosphate hydrolysis along with NPP1 and PHO5. The protein is Ectonucleotide pyrophosphatase/phosphodiesterase 2 (NPP2) of Saccharomyces cerevisiae (strain ATCC 204508 / S288c) (Baker's yeast).